The following is a 154-amino-acid chain: Aspartate carbamoyltransferase regulatory chain (154 aa).

Residues Cys109, Cys114, Cys138, and Cys141 each coordinate Zn(2+).

This sequence belongs to the PyrI family. In terms of assembly, contains catalytic and regulatory chains. It depends on Zn(2+) as a cofactor.

In terms of biological role, involved in allosteric regulation of aspartate carbamoyltransferase. The protein is Aspartate carbamoyltransferase regulatory chain of Aeromonas hydrophila subsp. hydrophila (strain ATCC 7966 / DSM 30187 / BCRC 13018 / CCUG 14551 / JCM 1027 / KCTC 2358 / NCIMB 9240 / NCTC 8049).